A 466-amino-acid polypeptide reads, in one-letter code: FERM domain-containing protein 8 (466 aa).

Met-1 is modified (N-acetylmethionine). The tract at residues 1-21 is disordered; that stretch reads MEGAEGNAGQPGPAERSHRSS. Ser-24 bears the Phosphoserine mark. The 348-residue stretch at 30–377 folds into the FERM domain; the sequence is ADVLVYLADD…YCIELSQAAE (348 aa). Residues 379–409 are disordered; the sequence is TLSQESASGPHEAPSPSPPPTQRPKLRRQGS. Ser-384 bears the Phosphoserine mark. The segment covering 391–400 has biased composition (pro residues); that stretch reads APSPSPPPTQ. Ser-409 is modified (phosphoserine). The residue at position 420 (Thr-420) is a Phosphothreonine. Phosphoserine is present on residues Ser-440 and Ser-447. Polar residues predominate over residues 442–460; that stretch reads FSRQLSSSQGSYTVVQPTD. Residues 442-466 form a disordered region; it reads FSRQLSSSQGSYTVVQPTDDSLEQS.

Interacts with iRhom proteins, including iRhom2/RHBDF2 (via cytoplasmic N-termini); this interaction leads to mutual protein stabilization. Interacts with LRP6; this interaction affects LRP6-binding to AXIN1. Widely expressed (at protein level).

It localises to the cytoplasm. Its subcellular location is the cytosol. It is found in the cell membrane. Its function is as follows. Promotes the cell surface stability of iRhom1/RHBDF1 and iRhom2/RHBDF2 and prevents their degradation via the endolysosomal pathway. By acting on iRhoms, involved in ADAM17-mediated shedding of TNF, amphiregulin/AREG, HBEGF and TGFA from the cell surface. Negatively regulates Wnt signaling, possibly by antagonizing the recruitment of AXIN1 to LRP6. The protein is FERM domain-containing protein 8 (Frmd8) of Mus musculus (Mouse).